The following is a 131-amino-acid chain: uncharacterized protein (131 aa).

2 helical membrane-spanning segments follow: residues 5 to 25 (VQPI…YVLV) and 34 to 54 (MAVT…YVMN). The disordered stretch occupies residues 62-131 (AAFKKAAKQS…KNKKKNRALF (70 aa)). 2 stretches are compositionally biased toward basic residues: residues 66–92 (KAAK…RVSH) and 122–131 (KNKKKNRALF).

It is found in the cell membrane. This is an uncharacterized protein from Bacillus subtilis (strain 168).